A 652-amino-acid chain; its full sequence is DNA ligase (652 aa).

NAD(+) contacts are provided by residues 29 to 33 (DSDYD), 78 to 79 (SL), and glutamate 107. Lysine 109 (N6-AMP-lysine intermediate) is an active-site residue. NAD(+)-binding residues include arginine 130, glutamate 164, lysine 278, and lysine 302. Residues cysteine 395, cysteine 398, cysteine 413, and cysteine 418 each contribute to the Zn(2+) site. The region spanning 577-652 (NSDAALFGLT…IEDEDWLRKL (76 aa)) is the BRCT domain.

Belongs to the NAD-dependent DNA ligase family. LigA subfamily. Mg(2+) serves as cofactor. It depends on Mn(2+) as a cofactor.

The enzyme catalyses NAD(+) + (deoxyribonucleotide)n-3'-hydroxyl + 5'-phospho-(deoxyribonucleotide)m = (deoxyribonucleotide)n+m + AMP + beta-nicotinamide D-nucleotide.. In terms of biological role, DNA ligase that catalyzes the formation of phosphodiester linkages between 5'-phosphoryl and 3'-hydroxyl groups in double-stranded DNA using NAD as a coenzyme and as the energy source for the reaction. It is essential for DNA replication and repair of damaged DNA. The chain is DNA ligase from Streptococcus pyogenes serotype M18 (strain MGAS8232).